A 1444-amino-acid polypeptide reads, in one-letter code: Probable serine/threonine-protein kinase irlC (1444 aa).

Residues 335–370 (TLINNNNNNNNNNNNNNNNNNNNNNNNNNNNNNNSK) form a disordered region. Positions 338–368 (NNNNNNNNNNNNNNNNNNNNNNNNNNNNNNN) are enriched in low complexity. The SWIM-type zinc finger occupies 495 to 529 (FTFYLSFGEIFTCSCEDYKREFSCKHMFFILLNYY). Residues 584 to 613 (TSPFQSINNNNNNNLNNNNNNNLNNNNNNE) show a composition bias toward low complexity. Disordered stretches follow at residues 584-619 (TSPF…NKFK) and 864-938 (QKEK…ITPI). Coiled coils occupy residues 593 to 620 (NNNN…KFKE) and 847 to 879 (IKAE…KSKI). Positions 864–876 (QKEKKKQKQKQSK) are enriched in basic residues. Residues 885-937 (SSSSSSSSSPSTSNTTITSTTPTTTTTTTTTTTPTTTTTTTTTSSPKQKPITP) show a composition bias toward low complexity. The 266-residue stretch at 981–1246 (RKEENVLGRG…IEKILLHPFF (266 aa)) folds into the Protein kinase domain. ATP contacts are provided by residues 987-995 (LGRGSNGTL) and Lys1010. Asp1116 acts as the Proton acceptor in catalysis. The KEN domain occupies 1279 to 1444 (NYQEINLKNN…LIYFNDLIIK (166 aa)).

Belongs to the protein kinase superfamily. Ser/Thr protein kinase family.

It carries out the reaction L-seryl-[protein] + ATP = O-phospho-L-seryl-[protein] + ADP + H(+). The enzyme catalyses L-threonyl-[protein] + ATP = O-phospho-L-threonyl-[protein] + ADP + H(+). The polypeptide is Probable serine/threonine-protein kinase irlC (irlC) (Dictyostelium discoideum (Social amoeba)).